The primary structure comprises 239 residues: uncharacterized protein (239 aa).

The segment at 104 to 127 (LPATSQSSQPKSTNSSTESSSIGQ) is disordered. Positions 107-127 (TSQSSQPKSTNSSTESSSIGQ) are enriched in low complexity. Residues 134–202 (ENEINLNKNK…HFIQNNQESF (69 aa)) are a coiled coil. Residues 211–231 (VKIGSAFIIYIFYNVLFFIIV) traverse the membrane as a helical segment.

Its subcellular location is the membrane. This is an uncharacterized protein from Dictyostelium discoideum (Social amoeba).